The following is a 327-amino-acid chain: Protein CONSERVED IN THE GREEN LINEAGE AND DIATOMS 27, chloroplastic (327 aa).

The transit peptide at 1–59 directs the protein to the chloroplast; the sequence is MLRLIVNYPLIPKISHRVCSNSSSKLGSYYDSSSIIKYGGISDVVGKKQELFLSVSVKA. Residues 66–88 are disordered; that stretch reads NGGGSMSFSGQSWDPSSEIEVPS. Helical transmembrane passes span 119 to 139, 148 to 168, and 225 to 245; these read LGGLWLVTFTVLGVPVAAASF, FILAAGTGTLFLVSLIVLRIY, and LIGTGALLVSAFVLFVFATPV.

Mostly expressed in seeds, leaves and flowers, and, to a lower extent, in roots.

It localises to the membrane. The protein localises to the plastid. It is found in the chloroplast. Required for growth in low iron conditions. The polypeptide is Protein CONSERVED IN THE GREEN LINEAGE AND DIATOMS 27, chloroplastic (Arabidopsis thaliana (Mouse-ear cress)).